We begin with the raw amino-acid sequence, 203 residues long: Superoxide dismutase [Mn/Fe] (203 aa).

Fe(3+) contacts are provided by His27, His81, Asp163, and His167. Residues His27, His81, Asp163, and His167 each contribute to the Mn(2+) site.

The protein belongs to the iron/manganese superoxide dismutase family. It depends on Mn(2+) as a cofactor. Fe(3+) serves as cofactor.

The enzyme catalyses 2 superoxide + 2 H(+) = H2O2 + O2. In terms of biological role, destroys superoxide anion radicals which are normally produced within the cells and which are toxic to biological systems. Catalyzes the dismutation of superoxide anion radicals into O2 and H2O2 by successive reduction and oxidation of the transition metal ion at the active site. This is Superoxide dismutase [Mn/Fe] (sodA) from Streptococcus mutans serotype c (strain ATCC 700610 / UA159).